A 259-amino-acid chain; its full sequence is Acetylglutamate kinase (259 aa).

Substrate contacts are provided by residues 45–46 (GG), R67, and N159.

It belongs to the acetylglutamate kinase family. ArgB subfamily.

Its subcellular location is the cytoplasm. It carries out the reaction N-acetyl-L-glutamate + ATP = N-acetyl-L-glutamyl 5-phosphate + ADP. It participates in amino-acid biosynthesis; L-arginine biosynthesis; N(2)-acetyl-L-ornithine from L-glutamate: step 2/4. Functionally, catalyzes the ATP-dependent phosphorylation of N-acetyl-L-glutamate. The polypeptide is Acetylglutamate kinase (Aeromonas salmonicida (strain A449)).